A 479-amino-acid polypeptide reads, in one-letter code: Catalase easC (479 aa).

The span at 1–13 (MASQVSLTAQGSG) shows a compositional bias: polar residues. The disordered stretch occupies residues 1–28 (MASQVSLTAQGSGLSAPLNGPEHLTSTT). His-53 is an active-site residue. Residue Tyr-343 participates in heme binding. The disordered stretch occupies residues 365–385 (HAANDAPKTKKPAVPLQKQSR).

It belongs to the catalase family. It depends on heme as a cofactor.

It functions in the pathway alkaloid biosynthesis; ergot alkaloid biosynthesis. Functionally, catalase; part of the gene cluster that mediates the biosynthesis of fungal ergot alkaloid. DmaW catalyzes the first step of ergot alkaloid biosynthesis by condensing dimethylallyl diphosphate (DMAP) and tryptophan to form 4-dimethylallyl-L-tryptophan. The second step is catalyzed by the methyltransferase easF that methylates 4-dimethylallyl-L-tryptophan in the presence of S-adenosyl-L-methionine, resulting in the formation of 4-dimethylallyl-L-abrine. The catalase easC and the FAD-dependent oxidoreductase easE then transform 4-dimethylallyl-L-abrine to chanoclavine-I which is further oxidized by easD in the presence of NAD(+), resulting in the formation of chanoclavine-I aldehyde. Agroclavine dehydrogenase easG then mediates the conversion of chanoclavine-I aldehyde to agroclavine via a non-enzymatic adduct reaction: the substrate is an iminium intermediate that is formed spontaneously from chanoclavine-I aldehyde in the presence of glutathione. Further conversion of agroclavine to paspalic acid is a two-step process involving oxidation of agroclavine to elymoclavine and of elymoclavine to paspalic acid, the second step being performed by the elymoclavine oxidase cloA. However, cloA does not encode a functional enzyme indicating that C.fusiformis terminates its ergot alkaloid pathway at elymoclavine. The protein is Catalase easC of Claviceps fusiformis (Ergot fungus).